We begin with the raw amino-acid sequence, 425 residues long: UBX domain-containing protein 4 (425 aa).

A disordered region spans residues 224–257; that stretch reads TPIPSLPSTPSSYQNLPSQSLTGESLPTVSNQEK. Over residues 236 to 254 the composition is skewed to polar residues; that stretch reads YQNLPSQSLTGESLPTVSN. Phosphoserine is present on Ser-338. One can recognise a UBX domain in the interval 341-390; that stretch reads PLPSSAIVKFDFGNGKSIVHEFSKDDNIETLRAFVASHLSPEESTSFQLT.

It is found in the cytoplasm. The protein resides in the nucleus. Involved in CDC48-dependent protein degradation through the ubiquitin/proteasome pathway. The protein is UBX domain-containing protein 4 (ubx4) of Schizosaccharomyces pombe (strain 972 / ATCC 24843) (Fission yeast).